A 717-amino-acid chain; its full sequence is Nuclear factor of activated T-cells, cytoplasmic 1 (717 aa).

Residues 1 to 38 are disordered; that stretch reads MPNTSFPVPSKFPLGPPAAVCGSGETLRPAPPSGGTMK. The segment at 120 to 125 is calcineurin-binding; the sequence is PRIEIT. Residues 128–220 form a transactivation domain A (TAD-A) region; sequence LGLHHGSGQF…CVSPKTTDPE (93 aa). Residues 202-298 are disordered; that stretch reads PQTSPWQSPC…PHGSPRVSVT (97 aa). Residues 203-216 are compositionally biased toward polar residues; it reads QTSPWQSPCVSPKT. 2 tandem repeats follow at residues 205–221 and 235–251. The interval 205 to 300 is 3 X SP repeats; sequence SPWQSPCVSP…GSPRVSVTED (96 aa). Residues S235 and S239 each carry the phosphoserine modification. Residues 238 to 250 are compositionally biased toward polar residues; the sequence is HSPSTSPRASITE. S247 is subject to Phosphoserine; by PKA. A Nuclear localization signal motif is present at residues 267–269; the sequence is KRK. A phosphoserine; by PKA mark is found at S271 and S296. Repeat unit 3 spans residues 284-300; that stretch reads SPTPSPHGSPRVSVTED. The Nuclear export signal motif lies at 312–323; it reads SAIVAAINALTT. Positions 411–593 constitute an RHD domain; it reads PSLPALDWQL…NPIECSQRSA (183 aa). The DNA-binding element occupies 440-447; the sequence is RAHYETEG. Residues 683-685 carry the Nuclear localization signal motif; it reads KRK.

As to quaternary structure, member of the multicomponent NFATC transcription complex that consists of at least two components, a pre-existing cytoplasmic component NFATC2 and an inducible nuclear component NFATC1. Other members such as NFATC4, NFATC3 or members of the activating protein-1 family, MAF, GATA4 and Cbp/p300 can also bind the complex. NFATC proteins bind to DNA as monomers. Interacts with HOMER2 and HOMER3; this interaction may compete with calcineurin/PPP3CA-binding and hence prevent NFATC1 dephosphorylation and activation. Interacts with TLE6/GRG6. In terms of processing, phosphorylated by NFATC-kinase and GSK3B; phosphorylation induces NFATC1 nuclear exit and dephosphorylation by calcineurin promotes nuclear import. Phosphorylation by PKA and DYRK2 negatively modulates nuclear accumulation, and promotes subsequent phosphorylation by GSK3B or casein kinase 1. Expressed in the submandibular gland (at protein level). Expressed in basal epidermal cells (at protein level). Expressed in spleen, skeletal muscle and skin. Express in the lung and thymus. Weakly expressed in heart, brain, liver and kidney. Not expressed in testis. Expressed in osteoclasts. Also expressed during TNFSF11/RANKL-induced differentiation of bone marrow-derived macrophages to osteoclasts.

The protein resides in the cytoplasm. It localises to the nucleus. Its function is as follows. Plays a role in the inducible expression of cytokine genes in T-cells, especially in the induction of the IL-2 or IL-4 gene transcription. Also controls gene expression in embryonic cardiac cells. Could regulate not only the activation and proliferation but also the differentiation and programmed death of T-lymphocytes as well as lymphoid and non-lymphoid cells. Required for osteoclastogenesis and regulates many genes important for osteoclast differentiation and function. This chain is Nuclear factor of activated T-cells, cytoplasmic 1 (Nfatc1), found in Mus musculus (Mouse).